Consider the following 470-residue polypeptide: Auxin transporter-like protein 3 (470 aa).

Over 1–57 (MAAEKIETVVAGNYLEMEREEENISGNKKSSTKTKLSNFFWHGGSVYDAWFSCASNQ) the chain is Cytoplasmic. Residues 58–75 (VAQVLLTLPYSFSQLGMM) traverse the membrane as a helical segment. Residues 76–77 (SG) are Extracellular-facing. Residues 78–98 (ILFQLFYGLMGSWTAYLISVL) traverse the membrane as a helical segment. Residues 99–134 (YVEYRTRKEREKFDFRNHVIQWFEVLDGLLGKHWRN) are Cytoplasmic-facing. The helical transmembrane segment at 135–155 (LGLIFNCTFLLFGSVIQLIAC) threads the bilayer. Topologically, residues 156-170 (ASNIYYINDKLDKRT) are extracellular. A helical transmembrane segment spans residues 171–191 (WTYIFGACCATTVFIPSFHNY). A topological domain (cytoplasmic) is located at residue arginine 192. A helical membrane pass occupies residues 193–213 (IWSFLGLAMTTYTSWYLTIAS). At 214-230 (LLHGQAEDVKHSGPTTM) the chain is on the extracellular side. Residues 231-251 (VLYFTGATNILYTFGGHAVTV) form a helical membrane-spanning segment. Over 252-264 (EIMHAMWKPQKFK) the chain is Cytoplasmic. The helical transmembrane segment at 265–285 (AIYLLATIYVLTLTLPSASAV) threads the bilayer. Topologically, residues 286–312 (YWAFGDKLLTHSNALSLLPKTGFRDTA) are extracellular. Residues 313–333 (VILMLIHQFITFGFASTPLYF) traverse the membrane as a helical segment. Over 334–354 (VWEKLIGVHETKSMFKRAMAR) the chain is Cytoplasmic. A helical transmembrane segment spans residues 355–375 (LPVVVPIWFLAIIFPFFGPIN). A topological domain (extracellular) is located at residue serine 376. A helical membrane pass occupies residues 377-397 (AVGSLLVSFTVYIIPALAHML). Residues 398–426 (TFAPAPSRENAVERPPRVVGGWMGTYCIN) are Cytoplasmic-facing. Residues 427–447 (IFVVVWVFVVGFGFGGWASMV) traverse the membrane as a helical segment. At 448-470 (NFVRQIDTFGLFTKCYQCPPHKP) the chain is on the extracellular side.

It belongs to the amino acid/polyamine transporter 2 family. Amino acid/auxin permease (AAAP) (TC 2.A.18.1) subfamily.

Its subcellular location is the cell membrane. Its function is as follows. Carrier protein involved in proton-driven auxin influx. Mediates the formation of auxin gradient from developing leaves (site of auxin biosynthesis) to tips by contributing to the loading of auxin in vascular tissues and facilitating acropetal (base to tip) auxin transport within inner tissues of the root apex, and basipetal (tip to base) auxin transport within outer tissues of the root apex. The chain is Auxin transporter-like protein 3 (LAX3) from Arabidopsis thaliana (Mouse-ear cress).